The chain runs to 157 residues: S-ribosylhomocysteine lyase (157 aa).

The Fe cation site is built by H54, H58, and C126.

The protein belongs to the LuxS family. Homodimer. Fe cation serves as cofactor.

It catalyses the reaction S-(5-deoxy-D-ribos-5-yl)-L-homocysteine = (S)-4,5-dihydroxypentane-2,3-dione + L-homocysteine. In terms of biological role, involved in the synthesis of autoinducer 2 (AI-2) which is secreted by bacteria and is used to communicate both the cell density and the metabolic potential of the environment. The regulation of gene expression in response to changes in cell density is called quorum sensing. Catalyzes the transformation of S-ribosylhomocysteine (RHC) to homocysteine (HC) and 4,5-dihydroxy-2,3-pentadione (DPD). In Bacillus anthracis (strain A0248), this protein is S-ribosylhomocysteine lyase.